A 215-amino-acid polypeptide reads, in one-letter code: 3-dehydroquinate dehydratase (215 aa).

3-dehydroquinate-binding positions include 27–29 and Arg54; that span reads EVR. His112 serves as the catalytic Proton donor/acceptor. Residue Lys139 is the Schiff-base intermediate with substrate of the active site. Arg176 and Gln198 together coordinate 3-dehydroquinate.

It belongs to the type-I 3-dehydroquinase family. In terms of assembly, homodimer.

The catalysed reaction is 3-dehydroquinate = 3-dehydroshikimate + H2O. The protein operates within metabolic intermediate biosynthesis; chorismate biosynthesis; chorismate from D-erythrose 4-phosphate and phosphoenolpyruvate: step 3/7. Involved in the third step of the chorismate pathway, which leads to the biosynthesis of aromatic amino acids. Catalyzes the cis-dehydration of 3-dehydroquinate (DHQ) and introduces the first double bond of the aromatic ring to yield 3-dehydroshikimate. The sequence is that of 3-dehydroquinate dehydratase from Thermococcus onnurineus (strain NA1).